The chain runs to 414 residues: Probable cell wall biosynthesis protein LcpB (414 aa).

The tract at residues 1 to 108 (MDSPGQGEIA…PPVIAGDGGR (108 aa)) is disordered. The Cytoplasmic segment spans residues 1 to 120 (MDSPGQGEIA…KAISFKPRGC (120 aa)). Residues 9–23 (IARDSQGRPILDRYG) are compositionally biased toward basic and acidic residues. The span at 33–42 (RQTPPTPRTP) shows a compositional bias: pro residues. Over residues 43-53 (PVNETRVYQPR) the composition is skewed to low complexity. Residues 54 to 80 (QTPPRQTPPRQTPPRQMPPRQTPPRQV) are compositionally biased toward pro residues. The chain crosses the membrane as a helical span at residues 121 to 141 (LGTIAGVLAVGLVLVFVVTLW). The Periplasmic segment spans residues 142–414 (ADSKLNRVDA…GAEALFSSMR (273 aa)).

It belongs to the LytR/CpsA/Psr (LCP) family.

It is found in the cell inner membrane. This chain is Probable cell wall biosynthesis protein LcpB, found in Corynebacterium glutamicum (strain ATCC 13032 / DSM 20300 / JCM 1318 / BCRC 11384 / CCUG 27702 / LMG 3730 / NBRC 12168 / NCIMB 10025 / NRRL B-2784 / 534).